The sequence spans 194 residues: MPQLQKPAPAFAGTAVVNGVFKDIKLSDYKGKYLVLFFYPLDFTFVCPTEIIAFSESAAEFRKINCEVIGCSTDSQFTHLAWINTPRKQGGLGSMDIPLLADKSMKVARDYGVLDEETGIPFRGLFIIDDKQNLRQITVNDLPVGRSVEETLRLVQAFQYTDKYGEVCPANWKPGQKTMVADPTKSKEYFETTS.

The 159-residue stretch at 2 to 160 (PQLQKPAPAF…TLRLVQAFQY (159 aa)) folds into the Thioredoxin domain. The active-site Cysteine sulfenic acid (-SOH) intermediate is C47. Phosphothreonine is present on T193. The residue at position 194 (S194) is a Phosphoserine.

This sequence belongs to the peroxiredoxin family. AhpC/Prx1 subfamily. As to quaternary structure, homodimer; disulfide-linked, upon oxidation. 5 homodimers assemble to form a ring-like decamer. Also exists as a monomer. Post-translationally, the enzyme can be inactivated by further oxidation of the cysteine sulfenic acid (C(P)-SOH) to sulphinic acid (C(P)-SO2H) instead of its condensation to a disulfide bond. It can be reactivated by forming a transient disulfide bond with sulfiredoxin SRXN1, which reduces the cysteine sulfinic acid in an ATP- and Mg-dependent manner. In terms of processing, conjugated to URM1, a ubiquitin-like protein. In terms of tissue distribution, detected in the head and body (at protein level).

Its subcellular location is the cytoplasm. The enzyme catalyses a hydroperoxide + [thioredoxin]-dithiol = an alcohol + [thioredoxin]-disulfide + H2O. Thiol-specific peroxidase that catalyzes the reduction of hydrogen peroxide and organic hydroperoxides to water and alcohols, respectively. Plays a role in cell protection against oxidative stress by detoxifying peroxides and as sensor of hydrogen peroxide-mediated signaling events. Might participate in the signaling cascades of growth factors and tumor necrosis factor-alpha by regulating the intracellular concentrations of H(2)O(2). Reduces an intramolecular disulfide bond in GDPD5 that gates the ability to GDPD5 to drive postmitotic motor neuron differentiation. The chain is Peroxiredoxin 2 from Drosophila melanogaster (Fruit fly).